We begin with the raw amino-acid sequence, 122 residues long: Acidic phospholipase A2 CTs-A3 (122 aa).

7 disulfides stabilise this stretch: cysteine 26/cysteine 116, cysteine 28/cysteine 44, cysteine 43/cysteine 95, cysteine 49/cysteine 122, cysteine 50/cysteine 88, cysteine 57/cysteine 81, and cysteine 75/cysteine 86. Tyrosine 27, glycine 29, and glycine 31 together coordinate Ca(2+). Histidine 47 is an active-site residue. Position 48 (aspartate 48) interacts with Ca(2+). Aspartate 89 is an active-site residue.

It depends on Ca(2+) as a cofactor. As to expression, expressed by the venom gland.

The protein localises to the secreted. It catalyses the reaction a 1,2-diacyl-sn-glycero-3-phosphocholine + H2O = a 1-acyl-sn-glycero-3-phosphocholine + a fatty acid + H(+). Its function is as follows. Snake venom phospholipase A2 (PLA2) that shows a moderate inhibition of ADP-induced human platelet aggregation when tested on platelet rich plasma. Exhibits moderate hydrolytic activities and prefers the anionic micelles (dPPC with deoxycholate) to the zwitterionic micelles (dPPC with Triton X-100). PLA2 catalyzes the calcium-dependent hydrolysis of the 2-acyl groups in 3-sn-phosphoglycerides. The protein is Acidic phospholipase A2 CTs-A3 of Trimeresurus stejnegeri (Chinese green tree viper).